We begin with the raw amino-acid sequence, 254 residues long: Phosphoribosylaminoimidazole-succinocarboxamide synthase (254 aa).

The protein belongs to the SAICAR synthetase family.

It carries out the reaction 5-amino-1-(5-phospho-D-ribosyl)imidazole-4-carboxylate + L-aspartate + ATP = (2S)-2-[5-amino-1-(5-phospho-beta-D-ribosyl)imidazole-4-carboxamido]succinate + ADP + phosphate + 2 H(+). Its pathway is purine metabolism; IMP biosynthesis via de novo pathway; 5-amino-1-(5-phospho-D-ribosyl)imidazole-4-carboxamide from 5-amino-1-(5-phospho-D-ribosyl)imidazole-4-carboxylate: step 1/2. The protein is Phosphoribosylaminoimidazole-succinocarboxamide synthase of Acidiphilium cryptum (strain JF-5).